The chain runs to 265 residues: Inositol-1-monophosphatase (265 aa).

Mg(2+) contacts are provided by glutamate 69, aspartate 87, isoleucine 89, and aspartate 90. Glutamate 69 contacts substrate. Substrate-binding positions include isoleucine 89–threonine 92, arginine 185, and aspartate 214. A Mg(2+)-binding site is contributed by aspartate 214.

This sequence belongs to the inositol monophosphatase superfamily. Mg(2+) serves as cofactor.

It catalyses the reaction a myo-inositol phosphate + H2O = myo-inositol + phosphate. The enzyme catalyses a ribonucleoside 5'-phosphate + H2O = a ribonucleoside + phosphate. Its function is as follows. Hydrolyzes myo-inositol monophosphate. Catalyzes the dephosphorylation of GMP and IMP. The polypeptide is Inositol-1-monophosphatase (Bacillus subtilis (strain 168)).